A 424-amino-acid chain; its full sequence is Folate-like transporter 3 (424 aa).

The N-linked (GlcNAc...) asparagine glycan is linked to Asn35. 5 helical membrane-spanning segments follow: residues 55–75 (VALIPSFLLTDVLLYKPILII), 78–98 (LSYFACWMIFVFGRSVWCMQL), 101–119 (LFYGWATATEIAYFAYIYV), 136–156 (ALLVGRFLAYTLAQLLIGLNW), and 164–184 (IINLVSMTFAVFLAAILPHVP). Asn254 is a glycosylation site (N-linked (GlcNAc...) asparagine). Helical transmembrane passes span 313–333 (GLLFWMSQSHEIIILYICYII), 361–381 (LFGINTFVALALQSILTAIVI), and 392–412 (FVVYSGYHIVVATLFGIIFGI).

The protein belongs to the reduced folate carrier (RFC) transporter (TC 2.A.48) family.

The protein resides in the membrane. The polypeptide is Folate-like transporter 3 (folt-3) (Caenorhabditis elegans).